Reading from the N-terminus, the 357-residue chain is Ion-translocating oxidoreductase complex subunit D (357 aa).

3 helical membrane passes run 35 to 55 (VWLY…TVLV), 88 to 108 (LPPW…VVLG), and 119 to 139 (LFNP…VEMT). The residue at position 176 (Thr-176) is an FMN phosphoryl threonine. The next 5 membrane-spanning stretches (helical) occupy residues 209–229 (APGS…VYLI), 233–253 (VIAW…ATVF), 261–281 (YADA…FFIA), 295–315 (AVFA…GGYP), and 316–336 (EATA…DHWI).

It belongs to the NqrB/RnfD family. In terms of assembly, the complex is composed of six subunits: RnfA, RnfB, RnfC, RnfD, RnfE and RnfG. FMN serves as cofactor.

The protein localises to the cell inner membrane. Its function is as follows. Part of a membrane-bound complex that couples electron transfer with translocation of ions across the membrane. The sequence is that of Ion-translocating oxidoreductase complex subunit D from Halorhodospira halophila (strain DSM 244 / SL1) (Ectothiorhodospira halophila (strain DSM 244 / SL1)).